The sequence spans 473 residues: Probable glycine dehydrogenase (decarboxylating) subunit 2 (473 aa).

Lys-266 is subject to N6-(pyridoxal phosphate)lysine.

Belongs to the GcvP family. C-terminal subunit subfamily. In terms of assembly, the glycine cleavage system is composed of four proteins: P, T, L and H. In this organism, the P 'protein' is a heterodimer of two subunits. It depends on pyridoxal 5'-phosphate as a cofactor.

The enzyme catalyses N(6)-[(R)-lipoyl]-L-lysyl-[glycine-cleavage complex H protein] + glycine + H(+) = N(6)-[(R)-S(8)-aminomethyldihydrolipoyl]-L-lysyl-[glycine-cleavage complex H protein] + CO2. The glycine cleavage system catalyzes the degradation of glycine. The P protein binds the alpha-amino group of glycine through its pyridoxal phosphate cofactor; CO(2) is released and the remaining methylamine moiety is then transferred to the lipoamide cofactor of the H protein. The polypeptide is Probable glycine dehydrogenase (decarboxylating) subunit 2 (Thermus thermophilus (strain ATCC BAA-163 / DSM 7039 / HB27)).